A 141-amino-acid chain; its full sequence is MEPLHKDAETAAAAAAVAAADPRGASSSSGVVVQVREKKGPLRAAIPYMPFPVAVICLFLNTFVPGLGTFVSAFTVLCGARTDLPDRHVCCVFWLNIAAALIQVLTAIVMVGWIMSIFWGMDMVILAISQGYKDQGIPQQL.

Phosphoserine is present on serine 26. The next 2 helical transmembrane spans lie at 51–71 and 87–107; these read FPVA…GTFV and RHVC…VLTA.

The protein belongs to the SPEC3 family. Stum subfamily.

It localises to the membrane. The protein is Protein stum homolog of Mus musculus (Mouse).